The chain runs to 226 residues: Flagellar L-ring protein (226 aa).

Positions 1–15 (MKRLAVSILCLALAG) are cleaved as a signal peptide. A lipid anchor (N-palmitoyl cysteine) is attached at Cys16. A lipid anchor (S-diacylglycerol cysteine) is attached at Cys16.

The protein belongs to the FlgH family. The basal body constitutes a major portion of the flagellar organelle and consists of four rings (L,P,S, and M) mounted on a central rod.

It is found in the cell outer membrane. Its subcellular location is the bacterial flagellum basal body. Functionally, assembles around the rod to form the L-ring and probably protects the motor/basal body from shearing forces during rotation. The sequence is that of Flagellar L-ring protein from Geobacter metallireducens (strain ATCC 53774 / DSM 7210 / GS-15).